The chain runs to 139 residues: Arsenate reductase (139 aa).

Active-site nucleophile residues include Cys-10, Cys-82, and Cys-89. Disulfide bonds link Cys-10-Cys-82 and Cys-82-Cys-89.

It belongs to the low molecular weight phosphotyrosine protein phosphatase family. Thioredoxin-coupled ArsC subfamily.

It is found in the cytoplasm. It catalyses the reaction arsenate + [thioredoxin]-dithiol + H(+) = arsenite + [thioredoxin]-disulfide + H2O. In terms of biological role, catalyzes the reduction of arsenate [As(V)] to arsenite [As(III)]. The chain is Arsenate reductase from Bacillus licheniformis (strain ATCC 14580 / DSM 13 / JCM 2505 / CCUG 7422 / NBRC 12200 / NCIMB 9375 / NCTC 10341 / NRRL NRS-1264 / Gibson 46).